The sequence spans 141 residues: Small ribosomal subunit protein eS17w (141 aa).

This sequence belongs to the eukaryotic ribosomal protein eS17 family.

The sequence is that of Small ribosomal subunit protein eS17w (RPS17D) from Arabidopsis thaliana (Mouse-ear cress).